The following is a 392-amino-acid chain: 1-deoxy-D-xylulose 5-phosphate reductoisomerase (392 aa).

NADPH is bound by residues threonine 10, glycine 11, serine 12, isoleucine 13, asparagine 38, and asparagine 124. A 1-deoxy-D-xylulose 5-phosphate-binding site is contributed by lysine 125. Glutamate 126 contributes to the NADPH binding site. A Mn(2+)-binding site is contributed by aspartate 150. Residues serine 151, glutamate 152, serine 176, and histidine 199 each contribute to the 1-deoxy-D-xylulose 5-phosphate site. Glutamate 152 provides a ligand contact to Mn(2+). Glycine 205 serves as a coordination point for NADPH. 1-deoxy-D-xylulose 5-phosphate-binding residues include serine 212, asparagine 217, lysine 218, and glutamate 221. Glutamate 221 provides a ligand contact to Mn(2+).

It belongs to the DXR family. Requires Mg(2+) as cofactor. Mn(2+) serves as cofactor.

It carries out the reaction 2-C-methyl-D-erythritol 4-phosphate + NADP(+) = 1-deoxy-D-xylulose 5-phosphate + NADPH + H(+). It functions in the pathway isoprenoid biosynthesis; isopentenyl diphosphate biosynthesis via DXP pathway; isopentenyl diphosphate from 1-deoxy-D-xylulose 5-phosphate: step 1/6. Its function is as follows. Catalyzes the NADPH-dependent rearrangement and reduction of 1-deoxy-D-xylulose-5-phosphate (DXP) to 2-C-methyl-D-erythritol 4-phosphate (MEP). In Synechococcus sp. (strain JA-2-3B'a(2-13)) (Cyanobacteria bacterium Yellowstone B-Prime), this protein is 1-deoxy-D-xylulose 5-phosphate reductoisomerase.